The following is a 75-amino-acid chain: UPF0346 protein LJ_1103 (75 aa).

This sequence belongs to the UPF0346 family.

The polypeptide is UPF0346 protein LJ_1103 (Lactobacillus johnsonii (strain CNCM I-12250 / La1 / NCC 533)).